Reading from the N-terminus, the 119-residue chain is Protein TusC (119 aa).

Belongs to the DsrF/TusC family. In terms of assembly, heterohexamer, formed by a dimer of trimers. The hexameric TusBCD complex contains 2 copies each of TusB, TusC and TusD. The TusBCD complex interacts with TusE.

It localises to the cytoplasm. In terms of biological role, part of a sulfur-relay system required for 2-thiolation of 5-methylaminomethyl-2-thiouridine (mnm(5)s(2)U) at tRNA wobble positions. The sequence is that of Protein TusC from Escherichia coli O127:H6 (strain E2348/69 / EPEC).